Here is a 264-residue protein sequence, read N- to C-terminus: Small ribosomal subunit protein eS4 (264 aa).

Residues 42 to 104 (LPLVIIMRNR…TNENFRLLYD (63 aa)) form the S4 RNA-binding domain.

Belongs to the eukaryotic ribosomal protein eS4 family.

The protein localises to the cytoplasm. The sequence is that of Small ribosomal subunit protein eS4 (RPS4) from Solanum tuberosum (Potato).